We begin with the raw amino-acid sequence, 110 residues long: Glutaredoxin-2 (110 aa).

Residues 6–106 (KAFVEKAISN…KMIAELKENK (101 aa)) enclose the Glutaredoxin domain. Cys26 and Cys29 are joined by a disulfide.

The protein belongs to the glutaredoxin family.

In terms of biological role, the disulfide bond functions as an electron carrier in the glutathione-dependent synthesis of deoxyribonucleotides by the enzyme ribonucleotide reductase. In addition, it is also involved in reducing some disulfides in a coupled system with glutathione reductase. Thioltransferase catalyzes cellular thiol-disulfide transhydrogenation reactions. It transfers reducing equivalents to cytosolic protein and nonprotein disulfides. The polypeptide is Glutaredoxin-2 (grx2) (Schizosaccharomyces pombe (strain 972 / ATCC 24843) (Fission yeast)).